We begin with the raw amino-acid sequence, 64 residues long: Temporin-ALh (64 aa).

A signal peptide spans 1–22 (MFPLKKSLLLLFFLATINLSLC). The propeptide occupies 23–46 (EQERNAEEERRDEPDERNAEVEKR). At S62 the chain carries Serine amide.

The protein belongs to the frog skin active peptide (FSAP) family. Temporin subfamily. In terms of tissue distribution, expressed by the skin glands.

Its subcellular location is the secreted. Functionally, antimicrobial peptide with activity against Gram-positive and Gram-negative bacteria and against fungi. Has been tested against S.aureus (MIC=2.5 ug/mL), B.pumilus (MIC=7.5 ug/mL), B.cereus (MIC=75.0 ug/mL), E.coli (MIC=5.0 ug/mL), B.dysenteriae (MIC=20.0 ug/mL), A.cacoaceticus (MIC=60.0 ug/mL), P.aeruginosa (MIC=2.5 ug/mL) and C.albicans (MIC=2.5 ug/mL). Also shows a weak hemolytic activity. In Amolops loloensis (Lolokou Sucker Frog), this protein is Temporin-ALh.